We begin with the raw amino-acid sequence, 94 residues long: Small ribosomal subunit protein uS19 (94 aa).

The protein belongs to the universal ribosomal protein uS19 family.

Protein S19 forms a complex with S13 that binds strongly to the 16S ribosomal RNA. This is Small ribosomal subunit protein uS19 from Clostridium botulinum (strain Hall / ATCC 3502 / NCTC 13319 / Type A).